The chain runs to 232 residues: 26S proteasome non-ATPase regulatory subunit 10 (232 aa).

ANK repeat units lie at residues Asp-45–Thr-75, Gly-79–Thr-108, Ser-112–Lys-141, Thr-144–Ser-173, Glu-177–Ile-206, and Asp-210–Lys-232.

Functionally, acts as a chaperone during the assembly of the 26S proteasome, specifically of the 19S regulatory complex (RC). This chain is 26S proteasome non-ATPase regulatory subunit 10 (psmD10), found in Dictyostelium discoideum (Social amoeba).